Reading from the N-terminus, the 217-residue chain is Imidazole glycerol phosphate synthase subunit HisH (217 aa).

Positions Gln6–Gln214 constitute a Glutamine amidotransferase type-1 domain. The active-site Nucleophile is Cys84. Catalysis depends on residues His189 and Glu191.

Heterodimer of HisH and HisF.

Its subcellular location is the cytoplasm. The catalysed reaction is 5-[(5-phospho-1-deoxy-D-ribulos-1-ylimino)methylamino]-1-(5-phospho-beta-D-ribosyl)imidazole-4-carboxamide + L-glutamine = D-erythro-1-(imidazol-4-yl)glycerol 3-phosphate + 5-amino-1-(5-phospho-beta-D-ribosyl)imidazole-4-carboxamide + L-glutamate + H(+). The enzyme catalyses L-glutamine + H2O = L-glutamate + NH4(+). Its pathway is amino-acid biosynthesis; L-histidine biosynthesis; L-histidine from 5-phospho-alpha-D-ribose 1-diphosphate: step 5/9. Its function is as follows. IGPS catalyzes the conversion of PRFAR and glutamine to IGP, AICAR and glutamate. The HisH subunit catalyzes the hydrolysis of glutamine to glutamate and ammonia as part of the synthesis of IGP and AICAR. The resulting ammonia molecule is channeled to the active site of HisF. This chain is Imidazole glycerol phosphate synthase subunit HisH, found in Synechococcus sp. (strain ATCC 27144 / PCC 6301 / SAUG 1402/1) (Anacystis nidulans).